Here is a 231-residue protein sequence, read N- to C-terminus: 7-cyano-7-deazaguanine synthase (231 aa).

8–18 (FSGGQDSTTCL) contributes to the ATP binding site. Residues Cys188, Cys197, Cys200, and Cys203 each contribute to the Zn(2+) site.

This sequence belongs to the QueC family. It depends on Zn(2+) as a cofactor.

It catalyses the reaction 7-carboxy-7-deazaguanine + NH4(+) + ATP = 7-cyano-7-deazaguanine + ADP + phosphate + H2O + H(+). Its pathway is purine metabolism; 7-cyano-7-deazaguanine biosynthesis. Catalyzes the ATP-dependent conversion of 7-carboxy-7-deazaguanine (CDG) to 7-cyano-7-deazaguanine (preQ(0)). The chain is 7-cyano-7-deazaguanine synthase from Escherichia fergusonii (strain ATCC 35469 / DSM 13698 / CCUG 18766 / IAM 14443 / JCM 21226 / LMG 7866 / NBRC 102419 / NCTC 12128 / CDC 0568-73).